A 338-amino-acid chain; its full sequence is Heat-inducible transcription repressor HrcA (338 aa).

This sequence belongs to the HrcA family.

Negative regulator of class I heat shock genes (grpE-dnaK-dnaJ and groELS operons). Prevents heat-shock induction of these operons. In Polaromonas sp. (strain JS666 / ATCC BAA-500), this protein is Heat-inducible transcription repressor HrcA.